Consider the following 225-residue polypeptide: Protein-disulfide oxidoreductase DsbI (225 aa).

A helical membrane pass occupies residues 27–47 (FLWLLMAIAMGGLIILAHSFF). A disulfide bond links cysteine 56 and cysteine 59. 2 helical membrane passes run 65 to 85 (AMFV…NIVL) and 87 to 107 (LIGC…SIKL). A disulfide bridge connects residues cysteine 128 and cysteine 154. Residues 199–219 (CMLAFGLCLILLLVMSGAWAL) form a helical membrane-spanning segment.

It belongs to the DsbB family. DsbI subfamily. Interacts with DsbL.

Its subcellular location is the cell inner membrane. Its function is as follows. Required for disulfide bond formation in some proteins. Part of a redox system composed of DsbI and DsbL that mediates formation of an essential disulfide bond in AssT. This Salmonella choleraesuis (strain SC-B67) protein is Protein-disulfide oxidoreductase DsbI.